A 184-amino-acid polypeptide reads, in one-letter code: Exosome complex protein LRP1 (184 aa).

A disordered region spans residues 157–184 (DSTDHIRKASSKKSKRLDKVGKKKGGKK). Positions 164 to 184 (KASSKKSKRLDKVGKKKGGKK) are enriched in basic residues.

This sequence belongs to the C1D family. In terms of assembly, associates with nuclear form of the RNA exosome complex. Interacts with RRP4, RRP6, RRP45 and RRP46.

The protein localises to the nucleus. Functionally, required for exosome-dependent processing of pre-rRNA and small nucleolar RNA (snRNA) precursors. Involved in processing of 35S pre-rRNA at the A0, A1 and A2 sites. Required for activity of RRP6 in 7S pre-rRNA processing. Also has a role in 3'-processing of U4 and U5 small nuclear RNAs (snRNAs). Acts as a mRNA export factor. Mediates mRNA degradation upon UV irradiation. Maintains genome integrity where it is involved in both non-homologous end joining (NHEJ) and homologous recombination pathway repair of double strand DNA breaks. During NHEJ, required for joining 3'-overhanging ends. Also involved in telomere length regulation and maintenance. This Saccharomyces cerevisiae (strain ATCC 204508 / S288c) (Baker's yeast) protein is Exosome complex protein LRP1 (LRP1).